The sequence spans 637 residues: Anthranilate synthase, phenazine specific (637 aa).

An anthranilate synthase component I region spans residues 1–434; sequence MSQAAARLME…QRQQTQSDFS (434 aa). A Glutamine amidotransferase type-1 domain is found at 437-628; sequence QVLIVDAEDT…LRHALIHTPV (192 aa). Active-site for GATase activity residues include C517, H602, and E604.

It catalyses the reaction chorismate + L-glutamine = anthranilate + pyruvate + L-glutamate + H(+). It functions in the pathway antibiotic biosynthesis; phenazine biosynthesis. In terms of biological role, involved in the biosynthesis of the antibiotic, phenazine, a nitrogen-containing heterocyclic molecule having important roles in virulence, competition and biological control. The sequence is that of Anthranilate synthase, phenazine specific (phzE) from Pseudomonas fluorescens.